Here is a 119-residue protein sequence, read N- to C-terminus: Large ribosomal subunit protein bL20 (119 aa).

This sequence belongs to the bacterial ribosomal protein bL20 family.

In terms of biological role, binds directly to 23S ribosomal RNA and is necessary for the in vitro assembly process of the 50S ribosomal subunit. It is not involved in the protein synthesizing functions of that subunit. This Levilactobacillus brevis (strain ATCC 367 / BCRC 12310 / CIP 105137 / JCM 1170 / LMG 11437 / NCIMB 947 / NCTC 947) (Lactobacillus brevis) protein is Large ribosomal subunit protein bL20.